We begin with the raw amino-acid sequence, 94 residues long: Protein LURE 1.1 (94 aa).

Positions 1–19 (MKLIFIFLTLLIFVSSCTS) are cleaved as a signal peptide. 3 disulfides stabilise this stretch: Cys-58–Cys-75, Cys-61–Cys-82, and Cys-65–Cys-84. Positions 67–87 (RRDRYIRTCSFERKLCRCSYS) are PRK6 binding.

This sequence belongs to the DEFL family. As to quaternary structure, binds to PRK6 LRRs. Expressed in the pistil. Detected exclusively in the synergid cells.

It localises to the secreted. Functionally, pollen tube attractants guiding pollen tubes to the ovular micropyle. The polypeptide is Protein LURE 1.1 (Arabidopsis thaliana (Mouse-ear cress)).